An 860-amino-acid chain; its full sequence is Leucine--tRNA ligase (860 aa).

The 'HIGH' region signature appears at Pro42–His52. Positions Lys619–Ser623 match the 'KMSKS' region motif. Lys622 contacts ATP.

It belongs to the class-I aminoacyl-tRNA synthetase family.

The protein localises to the cytoplasm. The enzyme catalyses tRNA(Leu) + L-leucine + ATP = L-leucyl-tRNA(Leu) + AMP + diphosphate. The chain is Leucine--tRNA ligase from Salmonella typhimurium (strain LT2 / SGSC1412 / ATCC 700720).